A 234-amino-acid chain; its full sequence is Ubiquinone biosynthesis O-methyltransferase (234 aa).

S-adenosyl-L-methionine-binding residues include Arg-37, Gly-56, Asp-77, and Met-121.

It belongs to the methyltransferase superfamily. UbiG/COQ3 family.

It catalyses the reaction a 3-demethylubiquinol + S-adenosyl-L-methionine = a ubiquinol + S-adenosyl-L-homocysteine + H(+). It carries out the reaction a 3-(all-trans-polyprenyl)benzene-1,2-diol + S-adenosyl-L-methionine = a 2-methoxy-6-(all-trans-polyprenyl)phenol + S-adenosyl-L-homocysteine + H(+). It participates in cofactor biosynthesis; ubiquinone biosynthesis. Its function is as follows. O-methyltransferase that catalyzes the 2 O-methylation steps in the ubiquinone biosynthetic pathway. The chain is Ubiquinone biosynthesis O-methyltransferase from Aromatoleum aromaticum (strain DSM 19018 / LMG 30748 / EbN1) (Azoarcus sp. (strain EbN1)).